The sequence spans 360 residues: 3-dehydroquinate synthase (360 aa).

NAD(+) is bound by residues 106 to 110 (GVIGD), 130 to 131 (TS), Lys143, and Lys152. Zn(2+) contacts are provided by Glu185, His246, and His262.

The protein belongs to the sugar phosphate cyclases superfamily. Dehydroquinate synthase family. Co(2+) serves as cofactor. The cofactor is Zn(2+). It depends on NAD(+) as a cofactor.

The protein resides in the cytoplasm. It catalyses the reaction 7-phospho-2-dehydro-3-deoxy-D-arabino-heptonate = 3-dehydroquinate + phosphate. It functions in the pathway metabolic intermediate biosynthesis; chorismate biosynthesis; chorismate from D-erythrose 4-phosphate and phosphoenolpyruvate: step 2/7. Functionally, catalyzes the conversion of 3-deoxy-D-arabino-heptulosonate 7-phosphate (DAHP) to dehydroquinate (DHQ). The chain is 3-dehydroquinate synthase from Leuconostoc citreum (strain KM20).